We begin with the raw amino-acid sequence, 439 residues long: D-erythronate kinase (439 aa).

ATP contacts are provided by residues S253, 366 to 369 (GGDV), and G412.

It belongs to the four-carbon acid sugar kinase family.

The enzyme catalyses D-erythronate + ATP = 4-phospho-D-erythronate + ADP + H(+). Its function is as follows. Catalyzes the ATP-dependent phosphorylation of D-erythronate to D-erythronate 4-phosphate. Can also phosphorylate D-threonate and 4-hydroxy-L-threonine, with lower efficiency. This is D-erythronate kinase from Heliobacterium modesticaldum (strain ATCC 51547 / Ice1).